The primary structure comprises 67 residues: Large ribosomal subunit protein bL31 (67 aa).

It belongs to the bacterial ribosomal protein bL31 family. Type A subfamily. In terms of assembly, part of the 50S ribosomal subunit.

Its function is as follows. Binds the 23S rRNA. The chain is Large ribosomal subunit protein bL31 from Helicobacter acinonychis (strain Sheeba).